Reading from the N-terminus, the 199-residue chain is Thymidine kinase (199 aa).

ATP-binding positions include 23–30 (GSMFSGKT) and 95–98 (DEAQ). The active-site Proton acceptor is the Glu-96. Zn(2+)-binding residues include Cys-152, Cys-155, Cys-184, and Cys-187.

Belongs to the thymidine kinase family. Homotetramer.

The protein localises to the cytoplasm. The catalysed reaction is thymidine + ATP = dTMP + ADP + H(+). This Bacteroides thetaiotaomicron (strain ATCC 29148 / DSM 2079 / JCM 5827 / CCUG 10774 / NCTC 10582 / VPI-5482 / E50) protein is Thymidine kinase.